We begin with the raw amino-acid sequence, 217 residues long: Glycosylphosphatidylinositol anchor biosynthesis protein 11 (217 aa).

N-linked (GlcNAc...) asparagine glycosylation is present at N20. 6 helical membrane-spanning segments follow: residues V41 to F61, D66 to F86, F107 to F127, W139 to C159, Y169 to D189, and V197 to I217.

It belongs to the PIGF family.

The protein localises to the endoplasmic reticulum membrane. The protein operates within glycolipid biosynthesis; glycosylphosphatidylinositol-anchor biosynthesis. Its function is as follows. Acts in the GPI biosynthetic pathway between GlcNAc-PI synthesis and GPI transfer to protein. This is Glycosylphosphatidylinositol anchor biosynthesis protein 11 (GPI11) from Kluyveromyces lactis (strain ATCC 8585 / CBS 2359 / DSM 70799 / NBRC 1267 / NRRL Y-1140 / WM37) (Yeast).